Here is a 328-residue protein sequence, read N- to C-terminus: WUSCHEL-related homeobox 6 (328 aa).

The span at 1–11 (MEGSSNSPDRQ) shows a compositional bias: polar residues. Positions 1–45 (MEGSSNSPDRQSSGGSPPEERGGGGSGGGGGRSAAGEPVRSRWTP) are disordered. Gly residues predominate over residues 23-33 (GGGSGGGGGRS). Positions 38 to 102 (PVRSRWTPKP…NRRSRSRRRQ (65 aa)) form a DNA-binding region, homeobox; WUS-type.

This sequence belongs to the WUS homeobox family.

It is found in the nucleus. Its function is as follows. Transcription factor which may be involved in developmental processes. This chain is WUSCHEL-related homeobox 6 (WOX6), found in Oryza sativa subsp. japonica (Rice).